The following is a 381-amino-acid chain: Alkanesulfonate monooxygenase (381 aa).

The protein belongs to the SsuD family. As to quaternary structure, homotetramer.

The catalysed reaction is an alkanesulfonate + FMNH2 + O2 = an aldehyde + FMN + sulfite + H2O + 2 H(+). Its function is as follows. Catalyzes the desulfonation of aliphatic sulfonates. The chain is Alkanesulfonate monooxygenase from Escherichia coli (strain SMS-3-5 / SECEC).